The chain runs to 196 residues: dTDP-4-dehydro-6-deoxyglucose 3-epimerase (196 aa).

Substrate is bound by residues Arg21, Glu26, Gln45 to Asn47, and Arg57. Residue His60 is the Proton acceptor of the active site. The substrate site is built by Lys70 and Arg117. Tyr130 serves as the catalytic Proton donor. Substrate contacts are provided by Glu141 and Arg166.

Belongs to the dTDP-4-dehydrorhamnose 3,5-epimerase family. Homodimer.

The enzyme catalyses dTDP-4-dehydro-6-deoxy-alpha-D-glucose = dTDP-4-dehydro-6-deoxy-alpha-D-allose. It participates in antibiotic biosynthesis. Its function is as follows. Involved in the biosynthesis of dTDP-6-deoxy-D-allose, an intermediate in the biosynthesis of mycinose, which is one of the two unusual sugars attached to the 16-membered macrolactone ring of the aglycone antibiotic chalcomycin. Catalyzes the conversion of dTDP-4-oxo-6-deoxyglucose to dTDP-4-oxo-6-deoxyallose, via a C-3 epimerization. The sequence is that of dTDP-4-dehydro-6-deoxyglucose 3-epimerase from Streptomyces bikiniensis.